Consider the following 85-residue polypeptide: Dr hemagglutinin AFA-III operon regulatory protein AfaF (85 aa).

To E.coli PapI and DaaF.

Its function is as follows. May have a possible regulatory function on the expression of the other AFA-III genes. The sequence is that of Dr hemagglutinin AFA-III operon regulatory protein AfaF (afaF) from Escherichia coli.